The following is a 556-amino-acid chain: Urocanate hydratase (556 aa).

NAD(+) is bound by residues 52-53, Gln130, 176-178, Glu196, Arg201, 242-243, 263-267, 273-274, and Tyr322; these read GG, GMG, NA, QTSAH, and YL. The active site involves Cys410. Gly492 is a binding site for NAD(+).

Belongs to the urocanase family. NAD(+) is required as a cofactor.

The protein localises to the cytoplasm. It catalyses the reaction 4-imidazolone-5-propanoate = trans-urocanate + H2O. It functions in the pathway amino-acid degradation; L-histidine degradation into L-glutamate; N-formimidoyl-L-glutamate from L-histidine: step 2/3. Catalyzes the conversion of urocanate to 4-imidazolone-5-propionate. The sequence is that of Urocanate hydratase from Shewanella sp. (strain MR-7).